Here is a 206-residue protein sequence, read N- to C-terminus: mRNA-decapping protein D9 (206 aa).

The Nudix hydrolase domain maps to Lys-23–Lys-206. A Nudix box motif is present at residues Gly-104–Asp-125. Glu-110 provides a ligand contact to Mg(2+). Catalysis depends on Glu-119, which acts as the Nucleophile. 2 residues coordinate Mg(2+): Glu-123 and Asp-144.

This sequence belongs to the Nudix hydrolase family. The cofactor is Mg(2+). Mn(2+) serves as cofactor.

In terms of biological role, decapping enzyme required for the removal of the 5'-end m7GpppN cap tethered to viral and host mRNAs to allow their decay in cells. May therefore accelerate viral and cellular mRNA turnover to eliminate competing host mRNAs and allow stage-specific synthesis of viral proteins. Acceleration of the turnover of cellular transcripts may even promote the shutoff of host protein synthesis. Does not cleave unmethylated RNAs or RNAs shorter than 24 nucleotides. The polypeptide is mRNA-decapping protein D9 (Oryctolagus cuniculus (Rabbit)).